A 608-amino-acid polypeptide reads, in one-letter code: MEFSKKTRELSIKKMQERTLDLLIIGGGITGAGVALQAAASGLETGLIEMQDFAEGTSSRSTKLVHGGLRYLKQFDVEVVSDTVSERAVVQQIAPHIPKSDPMLLPVYDEDGATFSLFRLKVAMDLYDLLAGVSNTPAANKVLSKDQVLERQPNLKKEGLVGGGVYLDFRNNDARLVIENIKRANQDGALIANHVKAEGFLFDESGKITGVVARDLLTDQVFEIKARLVINTTGPWSDKVRNLSNKGTQFSQMRPTKGVHLVVDSSKIKVSQPVYFDTGLGDGRMVFVLPRENKTYFGTTDTDYTGDLEHPKVTQEDVDYLLGIVNNRFPESNITIDDIESSWAGLRPLIAGNSASDYNGGNNGTISDESFDNLIATVESYLSKEKTREDVESAVSKLESSTSEKHLDPSAVSRGSSLDRDDNGLLTLAGGKITDYRKMAEGAMERVVDILKAEFDRSFKLINSKTYPVSGGELNPANVDSEIEAFAQLGVSRGLDSKEAHYLANLYGSNAPKVFALAHSLEQAPGLSLADTLSLHYAMRNELTLSPVDFLLRRTNHMLFMRDSLDSIVEPILDEMGRFYDWTEEEKATYRADVEAALANNDLAELKN.

An FAD-binding site is contributed by 21–49 (DLLIIGGGITGAGVALQAAASGLETGLIE). The segment at 393-418 (SAVSKLESSTSEKHLDPSAVSRGSSL) is disordered.

The protein belongs to the FAD-dependent glycerol-3-phosphate dehydrogenase family. It depends on FAD as a cofactor.

It localises to the cell membrane. The catalysed reaction is sn-glycerol 3-phosphate + O2 = dihydroxyacetone phosphate + H2O2. It participates in membrane lipid metabolism; glycerophospholipid metabolism. The sequence is that of Alpha-glycerophosphate oxidase (glpO) from Streptococcus pneumoniae serotype 4 (strain ATCC BAA-334 / TIGR4).